The chain runs to 442 residues: Septin-8 (442 aa).

A2 is modified (N-acetylalanine). Residue S10 is modified to Phosphoserine. In terms of domain architecture, Septin-type G spans 41–307 (QGFSFNILCV…ELYRRCKLEE (267 aa)). The G1 motif stretch occupies residues 51–58 (GETGIGKS). GTP contacts are provided by residues 51 to 58 (GETGIGKS), G106, 187 to 195 (KADTISKSE), G241, and R256. A G3 motif region spans residues 103 to 106 (DAVG). The tract at residues 186 to 189 (AKAD) is G4 motif. A coiled-coil region spans residues 322-410 (LQETYEAKRK…RKAAVEALQS (89 aa)). Positions 377–391 (HQEEKRKVEEKRREL) are enriched in basic and acidic residues. Positions 377–442 (HQEEKRKVEE…WSSIYSVTIP (66 aa)) are disordered. Composition is skewed to polar residues over residues 408-420 (LQSQ…SQQP) and 432-442 (GWSSIYSVTIP).

Belongs to the TRAFAC class TrmE-Era-EngA-EngB-Septin-like GTPase superfamily. Septin GTPase family. In terms of assembly, septins polymerize into heterooligomeric protein complexes that form filaments, and can associate with cellular membranes, actin filaments and microtubules. GTPase activity is required for filament formation. Interacts with CDK14, SEPTIN4, SEPTIN5 and SEPTIN7. Interacts with VAMP2; the interaction inhibits interaction of VAMP2 with SYP. Interacts with STX1A.

Its subcellular location is the cytoplasm. It localises to the cytoskeleton. The protein resides in the synapse. The protein localises to the cell projection. It is found in the axon. Its subcellular location is the cytoplasmic vesicle. It localises to the secretory vesicle. The protein resides in the synaptic vesicle membrane. The protein localises to the presynapse. In terms of biological role, filament-forming cytoskeletal GTPase. May play a role in platelet secretion. Seems to participate in the process of SNARE complex formation in synaptic vesicles. This is Septin-8 from Callithrix jacchus (White-tufted-ear marmoset).